The primary structure comprises 351 residues: Minor outer capsid protein P9 (351 aa).

Residues 246–330 are disordered; it reads GVPAALPQPD…EMDMPDGFHD (85 aa). Residues 285–298 show a composition bias toward basic and acidic residues; sequence MIRKKVETSKDAPS. Positions 315–324 are enriched in acidic residues; sequence LEDDMSEMDM.

Belongs to the phytoreovirus minor outer capsid protein P9 family.

Its subcellular location is the virion. It is found in the host cytoplasm. In terms of biological role, minor outer capsid protein. The sequence is that of Minor outer capsid protein P9 from Alopecurus aequalis (Barnyard grass).